A 144-amino-acid chain; its full sequence is Large ribosomal subunit protein uL15 (144 aa).

Residues 1–51 are disordered; the sequence is MRLNTIKPGAGSKSAGKRVGRGIGSGLGKTCGRGHKGQKSRAGGFHKVGFE. A compositionally biased stretch (gly residues) spans 21–31; it reads RGIGSGLGKTC.

Belongs to the universal ribosomal protein uL15 family. In terms of assembly, part of the 50S ribosomal subunit.

In terms of biological role, binds to the 23S rRNA. The sequence is that of Large ribosomal subunit protein uL15 from Azoarcus sp. (strain BH72).